The following is a 298-amino-acid chain: Inosose dehydratase (298 aa).

The protein belongs to the IolE/MocC family. It depends on glutathione as a cofactor. Co(2+) serves as cofactor. The cofactor is Mn(2+).

The enzyme catalyses scyllo-inosose = 3D-3,5/4-trihydroxycyclohexane-1,2-dione + H2O. Its pathway is polyol metabolism; myo-inositol degradation into acetyl-CoA; acetyl-CoA from myo-inositol: step 2/7. Catalyzes the dehydration of inosose (2-keto-myo-inositol, 2KMI or 2,4,6/3,5-pentahydroxycyclohexanone) to 3D-(3,5/4)-trihydroxycyclohexane-1,2-dione (D-2,3-diketo-4-deoxy-epi-inositol). The sequence is that of Inosose dehydratase from Clostridium botulinum (strain Alaska E43 / Type E3).